The sequence spans 284 residues: Pantothenate synthetase (284 aa).

Residue 30-37 (MGNLHDGH) participates in ATP binding. The active-site Proton donor is histidine 37. Glutamine 61 serves as a coordination point for (R)-pantoate. Glutamine 61 is a binding site for beta-alanine. Residue 149–152 (GEKD) coordinates ATP. Glutamine 155 lines the (R)-pantoate pocket. ATP-binding positions include valine 178 and 186–189 (LSSR).

It belongs to the pantothenate synthetase family. As to quaternary structure, homodimer.

Its subcellular location is the cytoplasm. The catalysed reaction is (R)-pantoate + beta-alanine + ATP = (R)-pantothenate + AMP + diphosphate + H(+). It functions in the pathway cofactor biosynthesis; (R)-pantothenate biosynthesis; (R)-pantothenate from (R)-pantoate and beta-alanine: step 1/1. Functionally, catalyzes the condensation of pantoate with beta-alanine in an ATP-dependent reaction via a pantoyl-adenylate intermediate. The chain is Pantothenate synthetase from Klebsiella pneumoniae subsp. pneumoniae (strain ATCC 700721 / MGH 78578).